A 235-amino-acid polypeptide reads, in one-letter code: Aspartate/glutamate leucyltransferase (235 aa).

The protein belongs to the R-transferase family. Bpt subfamily.

The protein localises to the cytoplasm. It carries out the reaction N-terminal L-glutamyl-[protein] + L-leucyl-tRNA(Leu) = N-terminal L-leucyl-L-glutamyl-[protein] + tRNA(Leu) + H(+). The catalysed reaction is N-terminal L-aspartyl-[protein] + L-leucyl-tRNA(Leu) = N-terminal L-leucyl-L-aspartyl-[protein] + tRNA(Leu) + H(+). Its function is as follows. Functions in the N-end rule pathway of protein degradation where it conjugates Leu from its aminoacyl-tRNA to the N-termini of proteins containing an N-terminal aspartate or glutamate. This chain is Aspartate/glutamate leucyltransferase, found in Shewanella putrefaciens (strain CN-32 / ATCC BAA-453).